Consider the following 889-residue polypeptide: Serine/threonine-protein kinase D3 (889 aa).

Ser27, Ser37, Ser41, and Ser44 each carry phosphoserine. The segment at 154–204 adopts a Phorbol-ester/DAG-type 1 zinc-finger fold; that stretch reads PHALYVHSYKAPTFCDYCGEMLWGLVRQGLKCEGCGLNYHKRCAFKIPNNC. Ser213 and Ser216 each carry phosphoserine. Residues 271–321 form a Phorbol-ester/DAG-type 2 zinc finger; sequence PHTFAVHSYGRPTICQYCKRLLKGLFRQGMQCKDCKFNCHKRCASKVPRDC. The segment at 336-370 is disordered; that stretch reads TDADMPMDIDSSDVNSDGSRGLDDSEEPSPPEDKM. Ser346, Ser391, and Ser395 each carry phosphoserine. In terms of domain architecture, PH spans 416–532; the sequence is TVVKEGWMVH…WEKAIRQALM (117 aa). Residue Tyr426 is modified to Phosphotyrosine. Residue Ser442 is modified to Phosphoserine. The residue at position 457 (Tyr457) is a Phosphotyrosine. The residue at position 535 (Thr535) is a Phosphothreonine. Ser539 is modified (phosphoserine). Positions 575–831 constitute a Protein kinase domain; that stretch reads IFADEVLGSG…VDKSLSHPWL (257 aa). ATP-binding positions include 581–589 and Lys604; that span reads LGSGQFGIV. Asp698 acts as the Proton acceptor in catalysis. Ser730 carries the post-translational modification Phosphoserine; by PKC. Residue Ser734 is modified to Phosphoserine; by autocatalysis. Residue Tyr741 is modified to Phosphotyrosine.

It belongs to the protein kinase superfamily. CAMK Ser/Thr protein kinase family. PKD subfamily. It depends on Mg(2+) as a cofactor.

The protein resides in the cytoplasm. Its subcellular location is the membrane. It carries out the reaction L-seryl-[protein] + ATP = O-phospho-L-seryl-[protein] + ADP + H(+). It catalyses the reaction L-threonyl-[protein] + ATP = O-phospho-L-threonyl-[protein] + ADP + H(+). Activated by DAG and phorbol esters. Phorbol-ester/DAG-type domains 1 and 2 bind both DAG and phorbol ester with high affinity and mediate translocation to the cell membrane. Autophosphorylation of Ser-734 and phosphorylation of Ser-730 by PKC relieves auto-inhibition by the PH domain. In terms of biological role, converts transient diacylglycerol (DAG) signals into prolonged physiological effects, downstream of PKC. Involved in resistance to oxidative stress. This chain is Serine/threonine-protein kinase D3 (Prkd3), found in Mus musculus (Mouse).